The sequence spans 951 residues: Glycine dehydrogenase (decarboxylating) (951 aa).

Lysine 709 bears the N6-(pyridoxal phosphate)lysine mark.

It belongs to the GcvP family. As to quaternary structure, the glycine cleavage system is composed of four proteins: P, T, L and H. The cofactor is pyridoxal 5'-phosphate.

It carries out the reaction N(6)-[(R)-lipoyl]-L-lysyl-[glycine-cleavage complex H protein] + glycine + H(+) = N(6)-[(R)-S(8)-aminomethyldihydrolipoyl]-L-lysyl-[glycine-cleavage complex H protein] + CO2. Its function is as follows. The glycine cleavage system catalyzes the degradation of glycine. The P protein binds the alpha-amino group of glycine through its pyridoxal phosphate cofactor; CO(2) is released and the remaining methylamine moiety is then transferred to the lipoamide cofactor of the H protein. This chain is Glycine dehydrogenase (decarboxylating), found in Gluconobacter oxydans (strain 621H) (Gluconobacter suboxydans).